The chain runs to 845 residues: Aryl hydrocarbon receptor (845 aa).

The propeptide occupies 1–10 (MNSSSASITY). The span at 1-10 (MNSSSASITY) shows a compositional bias: polar residues. A disordered region spans residues 1 to 39 (MNSSSASITYASRKRRKPVQKTVKPVPAEGIKSNPSKRH). Short sequence motifs (nuclear localization signal) lie at residues 13–16 (RKRR) and 37–42 (KRHRDR). Residues 27–80 (PAEGIKSNPSKRHRDRLNTELDRLASLLPFPQDVVNKLDKLSVLRLSVSYLRAK) form the bHLH domain. Required for maintaining the overall integrity of the AHR:ARNT heterodimer and its transcriptional activity regions lie at residues 50 to 82 (LASL…AKSF), 117 to 125 (LLQALNGFV), and 265 to 267 (FAI). The Nuclear export signal motif lies at 64–72 (LDKLSVLRL). The region spanning 110–180 (NLQEGEFLLQ…RQLHWALNPS (71 aa)) is the PAS 1 domain. Residues 274–341 (PSILEIRTKN…CAEYHIRMIK (68 aa)) enclose the PAS 2 domain. One can recognise a PAC domain in the interval 347–385 (LIVFRLLTKDNRWTWVQSNARLVYKNGRPDYIIATQRPL). The interval 820–845 (NNTQPTTHLHPSEARPFSDLTSSGFL) is disordered.

As to quaternary structure, homodimer. Heterodimer; efficient DNA binding requires dimerization with another bHLH protein. Interacts with ARNT; the heterodimer ARNT:AHR binds to core DNA sequence 5'-TGCGTG-3' within the dioxin response element (DRE) of target gene promoters and activates their transcription. Binds MYBBP1A. Interacts with coactivators including SRC-1, RIP140 and NOCA7, and with the corepressor SMRT. Interacts with NEDD8 and IVNS1ABP. Interacts with BMAL1. Interacts with HSP90AB1. Interacts with TIPARP; leading to mono-ADP-ribosylation of AHR and subsequent inhibition of AHR. Post-translationally, mono-ADP-ribosylated, leading to inhibit transcription activator activity of AHR.

The protein localises to the cytoplasm. It is found in the nucleus. In terms of biological role, ligand-activated transcription factor that enables cells to adapt to changing conditions by sensing compounds from the environment, diet, microbiome and cellular metabolism, and which plays important roles in development, immunity and cancer. Upon ligand binding, translocates into the nucleus, where it heterodimerizes with ARNT and induces transcription by binding to xenobiotic response elements (XRE). Regulates a variety of biological processes, including angiogenesis, hematopoiesis, drug and lipid metabolism, cell motility and immune modulation. Xenobiotics can act as ligands: upon xenobiotic-binding, activates the expression of multiple phase I and II xenobiotic chemical metabolizing enzyme genes (such as the CYP1A1 gene). Mediates biochemical and toxic effects of halogenated aromatic hydrocarbons. Next to xenobiotics, natural ligands derived from plants, microbiota, and endogenous metabolism are potent AHR agonists. Tryptophan (Trp) derivatives constitute an important class of endogenous AHR ligands. Acts as a negative regulator of anti-tumor immunity: indoles and kynurenic acid generated by Trp catabolism act as ligand and activate AHR, thereby promoting AHR-driven cancer cell motility and suppressing adaptive immunity. Regulates the circadian clock by inhibiting the basal and circadian expression of the core circadian component PER1. Inhibits PER1 by repressing the CLOCK-BMAL1 heterodimer mediated transcriptional activation of PER1. The heterodimer ARNT:AHR binds to core DNA sequence 5'-TGCGTG-3' within the dioxin response element (DRE) of target gene promoters and activates their transcription. The polypeptide is Aryl hydrocarbon receptor (AHR) (Delphinapterus leucas (Beluga whale)).